A 98-amino-acid polypeptide reads, in one-letter code: NADH-ubiquinone oxidoreductase chain 4L (98 aa).

Transmembrane regions (helical) follow at residues 1–21 (MSLT…GLLM), 29–49 (SLLC…ITIL), and 61–81 (IILL…LVMV).

It belongs to the complex I subunit 4L family. As to quaternary structure, core subunit of respiratory chain NADH dehydrogenase (Complex I) which is composed of 45 different subunits.

It localises to the mitochondrion inner membrane. The catalysed reaction is a ubiquinone + NADH + 5 H(+)(in) = a ubiquinol + NAD(+) + 4 H(+)(out). Core subunit of the mitochondrial membrane respiratory chain NADH dehydrogenase (Complex I) which catalyzes electron transfer from NADH through the respiratory chain, using ubiquinone as an electron acceptor. Part of the enzyme membrane arm which is embedded in the lipid bilayer and involved in proton translocation. The sequence is that of NADH-ubiquinone oxidoreductase chain 4L (MT-ND4L) from Artibeus jamaicensis (Jamaican fruit-eating bat).